The sequence spans 396 residues: MSKEKFERKKPHINVGTIGHVDHGKTTLTAALTKVLAEAHGGDARAFDQIDNAPEERARGITIATAHVEYESESRHYAHVDCPGHADYVKNMITGAAQMDGSILVVSAADGPMPQTREHILLARQVGVPAIVVFLNKADMVDDAELLELVEMEVRELLSDYDFDGDNIPVVTGSALKALEGDDSEMGRPAIIKLVEAMDAHIPQPERPVDGDFLMPIEDVFSISGRGTVVTGRVERGVIKVGEEVEIVGITDTRKTTCTGVEMFRKLLDQGEAGDNIGALLRGIKRDDVERGQVLCKPKSITPHTHFEAEVYVLSKDEGGRHTPFFNGYRPQFYFRTTDVTGTVTLPEGTEMVMPGDNVKMTVQLIAPIAMEDGLRFAIREGGRTVGAGVVSKIIE.

The tr-type G domain occupies 10-206 (KPHINVGTIG…AMDAHIPQPE (197 aa)). Positions 19-26 (GHVDHGKT) are G1. 19–26 (GHVDHGKT) contacts GTP. Thr-26 is a Mg(2+) binding site. Positions 60 to 64 (GITIA) are G2. The tract at residues 81–84 (DCPG) is G3. GTP contacts are provided by residues 81 to 85 (DCPGH) and 136 to 139 (NKAD). A G4 region spans residues 136–139 (NKAD). Residues 174 to 176 (SAL) are G5.

Belongs to the TRAFAC class translation factor GTPase superfamily. Classic translation factor GTPase family. EF-Tu/EF-1A subfamily. In terms of assembly, monomer.

It is found in the cytoplasm. It catalyses the reaction GTP + H2O = GDP + phosphate + H(+). Functionally, GTP hydrolase that promotes the GTP-dependent binding of aminoacyl-tRNA to the A-site of ribosomes during protein biosynthesis. This chain is Elongation factor Tu 1, found in Halorhodospira halophila (strain DSM 244 / SL1) (Ectothiorhodospira halophila (strain DSM 244 / SL1)).